Reading from the N-terminus, the 71-residue chain is Phosphatidylinositol N-acetylglucosaminyltransferase subunit Y (71 aa).

The Cytoplasmic portion of the chain corresponds to 1–3 (MFL). A helical membrane pass occupies residues 4–26 (SLPTLTVLIPLVSLAGLFYSASV). Residues 27 to 44 (EENFPQGCTSTASLCFYS) are Lumenal-facing. A helical membrane pass occupies residues 45-65 (LLLPITIPVYVFFHLWTWMGI). Topologically, residues 66–71 (KLFRHN) are cytoplasmic.

As to quaternary structure, component of the glycosylphosphatidylinositol-N-acetylglucosaminyltransferase (GPI-GnT) complex composed at least by PIGA, PIGC, PIGH, PIGP, PIGQ, PIGY and DPM2. Interacts directly with PIGA; this interaction regulates glycosylphosphatidylinositol-N-acetylglucosaminyltransferase activity. Does not interact with Ras proteins.

It localises to the endoplasmic reticulum membrane. It functions in the pathway glycolipid biosynthesis; glycosylphosphatidylinositol-anchor biosynthesis. Functionally, part of the glycosylphosphatidylinositol-N-acetylglucosaminyltransferase (GPI-GnT) complex that catalyzes the transfer of N-acetylglucosamine from UDP-N-acetylglucosamine to phosphatidylinositol and participates in the first step of GPI biosynthesis. May act by regulating the catalytic subunit PIGA. The polypeptide is Phosphatidylinositol N-acetylglucosaminyltransferase subunit Y (Homo sapiens (Human)).